The following is a 434-amino-acid chain: Glutamate-1-semialdehyde 2,1-aminomutase 1 (434 aa).

Position 270 is an N6-(pyridoxal phosphate)lysine (K270).

It belongs to the class-III pyridoxal-phosphate-dependent aminotransferase family. HemL subfamily. In terms of assembly, homodimer. Pyridoxal 5'-phosphate is required as a cofactor.

It is found in the cytoplasm. It carries out the reaction (S)-4-amino-5-oxopentanoate = 5-aminolevulinate. It participates in porphyrin-containing compound metabolism; protoporphyrin-IX biosynthesis; 5-aminolevulinate from L-glutamyl-tRNA(Glu): step 2/2. This chain is Glutamate-1-semialdehyde 2,1-aminomutase 1, found in Bacillus thuringiensis subsp. konkukian (strain 97-27).